Consider the following 757-residue polypeptide: Voltage-gated potassium channel KCNC3 (757 aa).

Positions 1–78 (MLSSVCVSSF…CPGLPAAAMG (78 aa)) are important for normal N-type inactivation. A disordered region spans residues 1–87 (MLSSVCVSSF…GRHGGGGGDS (87 aa)). Residues 1-290 (MLSSVCVSSF…EDPYSSRAAR (290 aa)) are Cytoplasmic-facing. Residues 21 to 40 (PAPPPQPPESPPPPPLPPQQ) show a composition bias toward pro residues. The segment covering 41 to 52 (QQPAQPGPAASP) has biased composition (low complexity). 4 residues coordinate Zn(2+): His157, Cys163, Cys184, and Cys185. Residues 210-219 (AANAANAAGA) are compositionally biased toward low complexity. Residues 210-232 (AANAANAAGAHDGGLDDEAGAGG) form a disordered region. A helical transmembrane segment spans residues 291-309 (YVAFASLFFILISITTFCL). N-linked (GlcNAc...) asparagine glycosylation is found at Asn320 and Asn336. The helical transmembrane segment at 351-370 (VEGVCVVWFTFEFLMRITFC) threads the bilayer. Topologically, residues 371 to 379 (PDKVEFLKS) are cytoplasmic. A helical transmembrane segment spans residues 380 to 398 (SLNIIDCVAILPFYLEVGL). Residues 412-434 (FLRVVRFVRILRIFKLTRHFVGL) form a helical; Voltage-sensor membrane-spanning segment. The Cytoplasmic segment spans residues 435–447 (RVLGHTLRASTNE). A helical transmembrane segment spans residues 448-469 (FLLLIIFLALGVLIFATMIYYA). A glycan (N-linked (GlcNAc...) asparagine) is linked at Asn483. 4 residues coordinate K(+): Thr503, Leu504, Gly505, and Tyr506. A Selectivity filter motif is present at residues 503-508 (TLGYGD). Residues 518 to 539 (LVGALCALAGVLTIAMPVPVIV) traverse the membrane as a helical segment. At 540–757 (NNFGMYYSLA…NANAAAWISP (218 aa)) the chain is on the cytoplasmic side. The segment at 556-613 (PKKKNKHIPRPPQPGSPNYCKPDPPPPPPPHPHHGSGGISPPPPITPPSMGVTVAGAY) is disordered. Arg625 is modified (omega-N-methylarginine). A disordered region spans residues 682 to 746 (QPAMSPEDKS…KPGPPSFLPD (65 aa)). 2 positions are modified to phosphoserine: Ser686 and Ser691. Over residues 728–743 (PPLPPQDWRKPGPPSF) the composition is skewed to pro residues.

Belongs to the potassium channel family. C (Shaw) (TC 1.A.1.2) subfamily. Kv3.3/KCNC3 sub-subfamily. In terms of assembly, homotetramer. Heterotetramer with KCNC1. Interacts (via C-terminus) with HAX1; this interaction modulates channel gating. Identified in a complex with ACTR3, a subunit of the Arp2/3 complex; this interaction is indirect and depends on the presence of HAX1. In terms of processing, N-glycosylated.

It is found in the cell membrane. Its subcellular location is the presynaptic cell membrane. The protein resides in the perikaryon. It localises to the cell projection. The protein localises to the axon. It is found in the dendrite. Its subcellular location is the dendritic spine membrane. The protein resides in the cytoplasm. It localises to the cell cortex. The protein localises to the cytoskeleton. It catalyses the reaction K(+)(in) = K(+)(out). Functionally, voltage-gated potassium channel that plays an important role in the rapid repolarization of fast-firing brain neurons. The channel opens in response to the voltage difference across the membrane, forming a potassium-selective channel through which potassium ions pass in accordance with their electrochemical gradient. The channel displays rapid activation and inactivation kinetics. It plays a role in the regulation of the frequency, shape and duration of action potentials in Purkinje cells. Required for normal survival of cerebellar neurons, probably via its role in regulating the duration and frequency of action potentials that in turn regulate the activity of voltage-gated Ca(2+) channels and cellular Ca(2+) homeostasis. Required for normal motor function. Plays a role in the reorganization of the cortical actin cytoskeleton and the formation of actin veil structures in neuronal growth cones via its interaction with HAX1 and the Arp2/3 complex. The polypeptide is Voltage-gated potassium channel KCNC3 (KCNC3) (Homo sapiens (Human)).